Reading from the N-terminus, the 357-residue chain is Protein RecA (357 aa).

67-74 (GPESSGKT) contacts ATP. Residues 332–357 (PSAMSSSSSDDENSEGNVDFETGEVF) are disordered.

This sequence belongs to the RecA family.

Its subcellular location is the cytoplasm. Its function is as follows. Can catalyze the hydrolysis of ATP in the presence of single-stranded DNA, the ATP-dependent uptake of single-stranded DNA by duplex DNA, and the ATP-dependent hybridization of homologous single-stranded DNAs. It interacts with LexA causing its activation and leading to its autocatalytic cleavage. The polypeptide is Protein RecA (Shewanella sp. (strain ANA-3)).